We begin with the raw amino-acid sequence, 645 residues long: MDFNREHKINFLYVLAAMVGVLLIQSLVSQPDHIRTIPYSEFQQLASQGKVTDLVVGPTRITGTLKDAPKDSPRHFSTLRVDQALAQSLTNENVTFSGEPEPGPWPTILGWLMPIVGFALVWMFLIRPMSMGPGMDGMMSIGKSKARVYVEKDIKVTFADVAGVDEAKDELKEVVSFLRDPRSYGRLGARVPKGVLLVGPPGTGKTLLARAVAGEAGVAFFSISGSEFVEMFVGVGAARVRDLFEQARKHAPAIVFIDELDSLGRARGSAFPGGGGHDEKEQTLNQLLAELDGFDTSIGVVLLAATNRPEILDPALLRAGRFDRQVLVDRPDKKGRAQILEVHLKKIALAPGVPVDDIAALTPGFSGADLANLVNEAAILATRRHAENVSLDDFTQAIERIVAGLEKRNRLLNAHEREVVAHHEMGHALVAMTLPGVDMVQKISIIPHGIAALGYTIQRPTEERFLMDRAELMNRMAVLLGGRAAERLIFADVSTGAADDLAKASAIARSMVVRFGMDPTLGQVAYEPETTSALGLPNGSEWRPRQYGEQTAAAIDAAVRELIETASACAFSILQANRGLLESAARDLLAKETMSGEELQALLSQLGGGAASASVLRDGGDGAADAGQDRSGEHRALTVEGGEAQ.

Residues 1–8 (MDFNREHK) lie on the Cytoplasmic side of the membrane. The chain crosses the membrane as a helical span at residues 9–29 (INFLYVLAAMVGVLLIQSLVS). Residues 30–105 (QPDHIRTIPY…FSGEPEPGPW (76 aa)) are Periplasmic-facing. The chain crosses the membrane as a helical span at residues 106 to 126 (PTILGWLMPIVGFALVWMFLI). Residues 127-645 (RPMSMGPGMD…ALTVEGGEAQ (519 aa)) are Cytoplasmic-facing. 199 to 206 (GPPGTGKT) contributes to the ATP binding site. Zn(2+) is bound at residue His423. Residue Glu424 is part of the active site. Residues His427 and Asp500 each contribute to the Zn(2+) site. Residues 612–645 (SASVLRDGGDGAADAGQDRSGEHRALTVEGGEAQ) are disordered. A compositionally biased stretch (basic and acidic residues) spans 627 to 637 (GQDRSGEHRAL).

The protein in the central section; belongs to the AAA ATPase family. In the C-terminal section; belongs to the peptidase M41 family. As to quaternary structure, homohexamer. Zn(2+) serves as cofactor.

It is found in the cell inner membrane. Functionally, acts as a processive, ATP-dependent zinc metallopeptidase for both cytoplasmic and membrane proteins. Plays a role in the quality control of integral membrane proteins. This Paraburkholderia phymatum (strain DSM 17167 / CIP 108236 / LMG 21445 / STM815) (Burkholderia phymatum) protein is ATP-dependent zinc metalloprotease FtsH.